A 129-amino-acid polypeptide reads, in one-letter code: Small ribosomal subunit protein uS11 (129 aa).

It belongs to the universal ribosomal protein uS11 family. As to quaternary structure, part of the 30S ribosomal subunit. Interacts with proteins S7 and S18. Binds to IF-3.

Located on the platform of the 30S subunit, it bridges several disparate RNA helices of the 16S rRNA. Forms part of the Shine-Dalgarno cleft in the 70S ribosome. The protein is Small ribosomal subunit protein uS11 of Azobacteroides pseudotrichonymphae genomovar. CFP2.